The chain runs to 127 residues: Ribonuclease P protein component (127 aa).

It belongs to the RnpA family. Consists of a catalytic RNA component (M1 or rnpB) and a protein subunit.

The catalysed reaction is Endonucleolytic cleavage of RNA, removing 5'-extranucleotides from tRNA precursor.. In terms of biological role, RNaseP catalyzes the removal of the 5'-leader sequence from pre-tRNA to produce the mature 5'-terminus. It can also cleave other RNA substrates such as 4.5S RNA. The protein component plays an auxiliary but essential role in vivo by binding to the 5'-leader sequence and broadening the substrate specificity of the ribozyme. This Prochlorococcus marinus (strain SARG / CCMP1375 / SS120) protein is Ribonuclease P protein component.